A 553-amino-acid polypeptide reads, in one-letter code: Protein PNS1 (553 aa).

The tract at residues 1-53 (MFGEGNKPTEPVPAYDAGQDPFQGPNASKNQYQGSAADYNGAPPPPASQPGNQ) is disordered. At 1-94 (MFGEGNKPTE…EDSKPKWNDW (94 aa)) the chain is on the cytoplasmic side. Polar residues predominate over residues 25–34 (PNASKNQYQG). The helical transmembrane segment at 95-115 (PFTIFFAGCVIAFIVVAAITL) threads the bilayer. Topologically, residues 116-142 (RAWSQNSSSQGSGVYDGANTGTLTTNS) are extracellular. N-linked (GlcNAc...) asparagine glycosylation occurs at Asn-121. The chain crosses the membrane as a helical span at residues 143 to 163 (AIMLAISCIIAFVFSIIGIVL). The Cytoplasmic portion of the chain corresponds to 164–169 (ARMFPK). The helical transmembrane segment at 170–190 (FFIIAGILFNIIAGLATAIMY) threads the bilayer. Residues 191–192 (LS) are Extracellular-facing. A helical membrane pass occupies residues 193–213 (LKYYSAGIVFLVFTAICALFY). At 214-241 (WRMRHRIPFTVAVLKTVMDVMKSYPQTW) the chain is on the cytoplasmic side. The chain crosses the membrane as a helical span at residues 242-262 (FVTLIGSIIATAFSILFSAVI). The Extracellular segment spans residues 263 to 287 (VATYMKYDDKANNPGCSTNGGSCSN). Residues 288 to 308 (AKLIGLLVLVFFCGYYIAEVI) traverse the membrane as a helical segment. The Cytoplasmic portion of the chain corresponds to 309 to 349 (RNVIHCTVSGIFGAWYYFSKSDQGMPKWPGFGALKRSLTYS). The chain crosses the membrane as a helical span at residues 350–370 (FGSICFGSLIVTIIETLKAVL). Topologically, residues 371–385 (RLAVDGVMGGGGADN) are extracellular. The chain crosses the membrane as a helical span at residues 386–406 (GWMQCLALIANWIFSFLEWLA). At 407-450 (RYFNHYAYVFIALYGKPYLRAAKETWYMLREKGIDALINDNLVN) the chain is on the cytoplasmic side. A helical membrane pass occupies residues 451–471 (VALSFFTLFTCYITTLFAYLY). Residues 472–484 (LRYTDPNYNDNNN) are Extracellular-facing. The chain crosses the membrane as a helical span at residues 485-505 (FTPALMAFAFVIAMEICNVIT). At 506–553 (ETIRSGTATFFVALGNDPEVFHLSYPERFDEIFRAYPEVLKKLSHQNV) the chain is on the cytoplasmic side.

The protein belongs to the CTL (choline transporter-like) family.

The protein resides in the cell membrane. Its function is as follows. Probably involved in transport through the plasma membrane. This Kluyveromyces lactis (strain ATCC 8585 / CBS 2359 / DSM 70799 / NBRC 1267 / NRRL Y-1140 / WM37) (Yeast) protein is Protein PNS1 (PNS1).